Consider the following 409-residue polypeptide: Cobalt-precorrin-5B C(1)-methyltransferase (409 aa).

The protein belongs to the CbiD family.

The enzyme catalyses Co-precorrin-5B + S-adenosyl-L-methionine = Co-precorrin-6A + S-adenosyl-L-homocysteine. The protein operates within cofactor biosynthesis; adenosylcobalamin biosynthesis; cob(II)yrinate a,c-diamide from sirohydrochlorin (anaerobic route): step 6/10. Functionally, catalyzes the methylation of C-1 in cobalt-precorrin-5B to form cobalt-precorrin-6A. This chain is Cobalt-precorrin-5B C(1)-methyltransferase, found in Methanopyrus kandleri (strain AV19 / DSM 6324 / JCM 9639 / NBRC 100938).